Consider the following 220-residue polypeptide: Claudin-3 (220 aa).

Topologically, residues 1 to 8 are cytoplasmic; that stretch reads MSMGLEIT. Residues 9–29 traverse the membrane as a helical segment; the sequence is GTALAVLGWLGTIVCCALPMW. The Extracellular portion of the chain corresponds to 30–80; sequence RVSAFIGSNIITSQNIWEGLWMNCVVQSTGQMQCKVYDSLLALPQDLQAAR. A helical transmembrane segment spans residues 81-101; it reads ALIVVAILLAAFGLLVALVGA. Residues 102–115 lie on the Cytoplasmic side of the membrane; it reads QCTNCVQDDTAKAK. The helical transmembrane segment at 116–136 threads the bilayer; the sequence is ITIVAGVLFLLAALLTLVPVS. Residues 137–159 are Extracellular-facing; the sequence is WSANTIIRDFYNPVVPEAQKREM. A helical membrane pass occupies residues 160 to 180; sequence GAGLYVGWAAAALQLLGGALL. At 181-220 the chain is on the cytoplasmic side; the sequence is CCSCPPREKKYTATKVVYSAPRSTGPGASLGTGYDRKDYV. Y198 carries the phosphotyrosine modification. Residues S199 and S209 each carry the phosphoserine modification. Residues 219 to 220 form an interactions with TJP1, TJP2 and TJP3 region; sequence YV.

It belongs to the claudin family. Can form homo- and heteropolymers with other CLDN. Homopolymers interact with CLDN1 and CLDN2 homopolymers. Interacts in cis (within the same plasma membrane) with CLDN19. Directly interacts with TJP1/ZO-1, TJP2/ZO-2 and TJP3/ZO-3.

It localises to the cell junction. The protein resides in the tight junction. The protein localises to the cell membrane. Its function is as follows. Barrier-forming claudin. Plays a major role in tight junction-specific obliteration of the intercellular space, through calcium-independent cell-adhesion activity. In Homo sapiens (Human), this protein is Claudin-3 (CLDN3).